The primary structure comprises 445 residues: Exodeoxyribonuclease 7 large subunit (445 aa).

This sequence belongs to the XseA family. Heterooligomer composed of large and small subunits.

Its subcellular location is the cytoplasm. The catalysed reaction is Exonucleolytic cleavage in either 5'- to 3'- or 3'- to 5'-direction to yield nucleoside 5'-phosphates.. Bidirectionally degrades single-stranded DNA into large acid-insoluble oligonucleotides, which are then degraded further into small acid-soluble oligonucleotides. This chain is Exodeoxyribonuclease 7 large subunit, found in Xanthomonas oryzae pv. oryzae (strain KACC10331 / KXO85).